The chain runs to 343 residues: Tribbles homolog 2 (343 aa).

Residues 25-50 (EELSSIRSAEPSQSFSPNLGSPSPPE) are disordered. Polar residues predominate over residues 29-45 (SIRSAEPSQSFSPNLGS). The Protein kinase domain maps to 61-308 (IGKYLLLEPL…SQEILDHPWF (248 aa)).

This sequence belongs to the protein kinase superfamily. CAMK Ser/Thr protein kinase family. Tribbles subfamily.

The protein localises to the cytoplasm. The protein resides in the cytoskeleton. Interacts with MAPK kinases and regulates activation of MAP kinases. Does not display kinase activity. This Mus musculus (Mouse) protein is Tribbles homolog 2.